A 323-amino-acid polypeptide reads, in one-letter code: Pantothenate kinase (323 aa).

The segment covering 1-12 has biased composition (polar residues); it reads MAEQNAASTTGV. The tract at residues 1–24 is disordered; it reads MAEQNAASTTGVKPSPRTPDFSPY. 108-115 is an ATP binding site; it reads GSVAVGKS.

Belongs to the prokaryotic pantothenate kinase family.

Its subcellular location is the cytoplasm. The catalysed reaction is (R)-pantothenate + ATP = (R)-4'-phosphopantothenate + ADP + H(+). It functions in the pathway cofactor biosynthesis; coenzyme A biosynthesis; CoA from (R)-pantothenate: step 1/5. This chain is Pantothenate kinase, found in Corynebacterium glutamicum (strain R).